Here is a 339-residue protein sequence, read N- to C-terminus: Ferrochelatase (339 aa).

His-202 and Glu-283 together coordinate Fe cation.

The protein belongs to the ferrochelatase family.

Its subcellular location is the cytoplasm. It carries out the reaction heme b + 2 H(+) = protoporphyrin IX + Fe(2+). Its pathway is porphyrin-containing compound metabolism; protoheme biosynthesis; protoheme from protoporphyrin-IX: step 1/1. Functionally, catalyzes the ferrous insertion into protoporphyrin IX. This is Ferrochelatase from Psychrobacter cryohalolentis (strain ATCC BAA-1226 / DSM 17306 / VKM B-2378 / K5).